An 84-amino-acid chain; its full sequence is Acyl carrier protein (84 aa).

The 76-residue stretch at 6 to 81 folds into the Carrier domain; it reads EEILTGLAEI…DAVDYIANAT (76 aa). Residue serine 41 is modified to O-(pantetheine 4'-phosphoryl)serine.

It belongs to the acyl carrier protein (ACP) family. 4'-phosphopantetheine is transferred from CoA to a specific serine of apo-ACP by AcpS. This modification is essential for activity because fatty acids are bound in thioester linkage to the sulfhydryl of the prosthetic group.

It is found in the cytoplasm. Its pathway is lipid metabolism; fatty acid biosynthesis. Its function is as follows. Carrier of the growing fatty acid chain in fatty acid biosynthesis. The polypeptide is Acyl carrier protein (Acidothermus cellulolyticus (strain ATCC 43068 / DSM 8971 / 11B)).